We begin with the raw amino-acid sequence, 326 residues long: Serpentine receptor class alpha-12 (326 aa).

The Extracellular portion of the chain corresponds to 1–17; sequence MSCASEVQAQLFTHPVQ. The helical transmembrane segment at 18–38 threads the bilayer; it reads IIYACVQTVLFLATIIGSLLA. Topologically, residues 39–54 are cytoplasmic; the sequence is IVQLCKKTTIPDSTKV. A helical membrane pass occupies residues 55–75; it reads LLIGALFFANAHELAYFSSPF. Topologically, residues 76-101 are extracellular; sequence KVFKMNLFHTNTSCYPLASTLECIPT. Residues 102–122 traverse the membrane as a helical segment; sequence TTVLAMGISGNMLIQSALSIF. Over 123–138 the chain is Cytoplasmic; the sequence is RLLATIFPVCYSRMRA. A helical transmembrane segment spans residues 139–159; sequence LPGVVLLFMVLIPSFLSYSWI. At 160 to 185 the chain is on the extracellular side; that stretch reads RSDIVLDDYQMFCSQWSANISSRANT. The helical transmembrane segment at 186-206 threads the bilayer; that stretch reads YLEYCSYLTVAHIIINALIIL. The Cytoplasmic portion of the chain corresponds to 207 to 234; it reads RNRSVESKCRFDVQQRYLNSETLKTTQT. The chain crosses the membrane as a helical span at residues 235–255; the sequence is ICYLSIAQFLAMFLYSGGVLF. The Extracellular segment spans residues 256-270; sequence MRKNQKNIPTLIYIN. Residues 271-291 traverse the membrane as a helical segment; it reads VIVWVYAPPYACVSLAPLILF. Topologically, residues 292-326 are cytoplasmic; that stretch reads SLWNLKKQRQIRIQSITVQKETQEDHIRKLQLSWG.

The protein belongs to the nematode receptor-like protein sra family.

The protein localises to the membrane. This chain is Serpentine receptor class alpha-12, found in Caenorhabditis briggsae.